The following is a 1485-amino-acid chain: Dicer-like protein 2 (1485 aa).

Residues 1 to 11 (MSSQDESASSS) show a composition bias toward low complexity. A disordered region spans residues 1 to 61 (MSSQDESASS…EPQPSGNGPR (61 aa)). The Helicase ATP-binding domain occupies 72–250 (MFQASMQQNI…MEDLESSLDS (179 aa)). An ATP-binding site is contributed by 85–92 (MDTGSGKT). A DEAH box motif is present at residues 193 to 196 (DEAH). In terms of domain architecture, Helicase C-terminal spans 415–579 (KLQVLLRILR…RYENDMRELD (165 aa)). One can recognise a Dicer dsRNA-binding fold domain in the interval 609-712 (AKGHLEHFCR…LPIRESDFVD (104 aa)). RNase III domains lie at 988–1127 (AQEL…IEGG) and 1168–1358 (LGPL…VDSG). Mg(2+) is bound by residues Glu-1208, Asp-1344, and Glu-1347. The DRBM domain occupies 1388-1469 (HPKEELGRVA…ALEVIRVWEE (82 aa)).

It belongs to the helicase family. Dicer subfamily. It depends on Mg(2+) as a cofactor. Mn(2+) serves as cofactor.

In terms of biological role, dicer-like endonuclease involved in cleaving double-stranded RNA in the RNA interference (RNAi) pathway. Produces 21 to 25 bp dsRNAs (siRNAs) which target the selective destruction of homologous RNAs leading to sequence-specific suppression of gene expression, called post-transcriptional gene silencing (PTGS). Part of a broad host defense response against viral infection and transposons. This is Dicer-like protein 2 (DCL2) from Pyricularia oryzae (strain 70-15 / ATCC MYA-4617 / FGSC 8958) (Rice blast fungus).